Reading from the N-terminus, the 345-residue chain is Heat-inducible transcription repressor HrcA (345 aa).

The protein belongs to the HrcA family.

In terms of biological role, negative regulator of class I heat shock genes (grpE-dnaK-dnaJ and groELS operons). Prevents heat-shock induction of these operons. This chain is Heat-inducible transcription repressor HrcA, found in Lachnoclostridium phytofermentans (strain ATCC 700394 / DSM 18823 / ISDg) (Clostridium phytofermentans).